Consider the following 328-residue polypeptide: 17-beta-hydroxysteroid dehydrogenase type 1 (328 aa).

Residues 10–38 (GCSS…ATLR) and Asp-66 each bind NADP(+). Ser-135 carries the phosphoserine; by PKA modification. Residue Ser-143 participates in substrate binding. Tyr-156 functions as the Proton acceptor in the catalytic mechanism. Position 160 (Lys-160) interacts with NADP(+). The disordered stretch occupies residues 291-328 (KAEAGAEAGGGAGPGAEDEAGRGAVGDPELGDPPAAPQ).

This sequence belongs to the short-chain dehydrogenases/reductases (SDR) family. In terms of assembly, homodimer. Exists predominantly as a homodimer but also exits as monomer.

The protein resides in the cytoplasm. It carries out the reaction 17beta-estradiol + NAD(+) = estrone + NADH + H(+). The enzyme catalyses 17beta-estradiol + NADP(+) = estrone + NADPH + H(+). It catalyses the reaction testosterone + NADP(+) = androst-4-ene-3,17-dione + NADPH + H(+). Its pathway is steroid biosynthesis; estrogen biosynthesis. Functionally, favors the reduction of estrogens and androgens. Converts estrone (E1) to a more potent estrogen, 17beta-estradiol (E2). Also has 20-alpha-HSD activity. Uses preferentially NADH. The sequence is that of 17-beta-hydroxysteroid dehydrogenase type 1 from Homo sapiens (Human).